The sequence spans 711 residues: Interferon-induced GTP-binding protein Mx2 (711 aa).

Residues 115 to 387 (DLALPAIAVI…LILHINKSLP (273 aa)) form the Dynamin-type G domain. Residues 125-132 (GDQSSGKS) form a G1 motif region. 125–132 (GDQSSGKS) is a binding site for GTP. The tract at residues 150–152 (VTR) is G2 motif. Residues 225 to 228 (DLPG) are G3 motif. Residues 225–229 (DLPGI) and 294–297 (TKPD) each bind GTP. A G4 motif region spans residues 294-297 (TKPD). The interval 326 to 329 (RCRG) is G5 motif. Positions 623–711 (NDEIGVHLNA…ARRALYMFFS (89 aa)) constitute a GED domain.

The protein belongs to the TRAFAC class dynamin-like GTPase superfamily. Dynamin/Fzo/YdjA family.

The protein localises to the cytoplasm. The protein resides in the nucleus. Interferon-induced dynamin-like GTPase with antiviral activity against vesicular stomatitis virus (VSV). This chain is Interferon-induced GTP-binding protein Mx2 (MX2), found in Canis lupus familiaris (Dog).